The chain runs to 79 residues: MASKEEILAGLAEIVNEETGLDTAEVQPEKSFTDDLDIDSISMMTIVVNAEDKFGVKIPDEEVKNLKTVQDAVDFIXGA.

The Carrier domain maps to 2 to 79 (ASKEEILAGL…QDAVDFIXGA (78 aa)). Residue Ser-40 is modified to O-(pantetheine 4'-phosphoryl)serine.

It belongs to the acyl carrier protein (ACP) family. Post-translationally, 4'-phosphopantetheine is transferred from CoA to a specific serine of apo-ACP by AcpS. This modification is essential for activity because fatty acids are bound in thioester linkage to the sulfhydryl of the prosthetic group.

The protein localises to the cytoplasm. It functions in the pathway lipid metabolism; fatty acid biosynthesis. Functionally, carrier of the growing fatty acid chain in fatty acid biosynthesis. The chain is Acyl carrier protein from Myxococcus xanthus.